The primary structure comprises 311 residues: Small ribosomal subunit protein uS3 (311 aa).

In terms of domain architecture, KH type-2 spans 17-86 (MDEYFAEQLN…NPQIDAQEVK (70 aa)). Residues 190-267 (PDSYTTTEPS…EPQAEVAEDL (78 aa)) are disordered. Positions 194-204 (TTTEPSEPVTE) are enriched in low complexity. Positions 205–231 (PVEKPAEKPAAKPAEKPVEAPKKESAA) are enriched in basic and acidic residues. Over residues 232–247 (KPKTPAVAPEKPVETA) the composition is skewed to low complexity. Residues 248–267 (EVAEPEEAEEEPQAEVAEDL) are compositionally biased toward acidic residues.

It belongs to the universal ribosomal protein uS3 family. Part of the 30S ribosomal subunit.

Binds the lower part of the 30S subunit head. In Methanosarcina barkeri (strain Fusaro / DSM 804), this protein is Small ribosomal subunit protein uS3.